Here is a 217-residue protein sequence, read N- to C-terminus: Secreted RxLR effector protein 147 (217 aa).

The signal sequence occupies residues 1 to 23 (MRGAFYVTTALLITNSIRTAAEA). The segment at 22-52 (EANPPGRQPMSHHDGVVPGKSSPRRFLQGSH) is disordered. The short motif at 46 to 67 (RFLQGSHEPHDKFAVSAANEER) is the RxLR-dEER element.

The protein belongs to the RxLR effector family.

Its subcellular location is the secreted. The protein resides in the host nucleus. It localises to the host cytoplasm. Secreted effector that completely suppresses the host cell death induced by cell death-inducing proteins. The protein is Secreted RxLR effector protein 147 of Plasmopara viticola (Downy mildew of grapevine).